A 125-amino-acid chain; its full sequence is MEHVAFGSEDIENTLAKMDDGQLDGLAFGAIQLDGDGNILQYNAAEGDITGRDPKQVIGKNFFKDVAPCTDSPEFYGKFKEGVASGNLNTMFEYTFDYQMTPTKVKVHMKKALSGDSYWVFVKRV.

Residues 23-86 form the PAS domain; that stretch reads LDGLAFGAIQ…GKFKEGVASG (64 aa). An S-(4-hydroxycinnamyl)cysteine modification is found at C69.

It belongs to the photoactive yellow protein family. As to quaternary structure, monomer. Post-translationally, the 4-hydroxycinnamic acid (p-coumaric acid) chromophore is covalently bound via a thioester linkage.

Photoactive blue light protein. Probably functions as a photoreceptor for a negative phototaxis response. In Halorhodospira halophila (Ectothiorhodospira halophila), this protein is Photoactive yellow protein (pyp).